We begin with the raw amino-acid sequence, 286 residues long: Forkhead box protein E3 (286 aa).

Residues 1–62 (MDAHVAFSGF…GRRRRRPLQR (62 aa)) form a disordered region. Residues 64 to 158 (KPPYSYIALI…DNGSFLRRRK (95 aa)) constitute a DNA-binding region (fork-head).

It localises to the nucleus. In terms of biological role, transcription factor that controls lens epithelial cell growth through regulation of proliferation, apoptosis and cell cycle. During lens development, controls the ratio of the lens fiber cells to the cells of the anterior lens epithelium by regulating the rate of proliferation and differentiation. Controls lens vesicle closure and subsequent separation of the lens vesicle from ectoderm. Controls the expression of DNAJB1 in a pathway that is crucial for the development of the anterior segment of the eye. This Rattus norvegicus (Rat) protein is Forkhead box protein E3 (Foxe3).